The sequence spans 85 residues: Large ribosomal subunit protein bL27 (85 aa).

A disordered region spans residues 1–20 (MATKKAGGSTRNGRDSEAKR).

Belongs to the bacterial ribosomal protein bL27 family.

This is Large ribosomal subunit protein bL27 from Pasteurella multocida (strain Pm70).